The primary structure comprises 220 residues: MKCLLCGQTMKTVLTFSSLLLLRNDDSCLCSDCDSTFERIGEENCPNCMKTELSTKCQDCQLWCKEGVGVSHRAIFTYNQAMKDFFSRYKFDGDFLLRKVFASFLSEELKKYKEYQFVVIPLSPDRYANRGFNQVEGLVEAAGFEYLDLLEKREERASSSKNRSERLGTELPFFIKSGVTIPKKILLIDDIYTTGATINRVKKLLEEAGAKDVKTFSLVR.

This sequence belongs to the ComF/GntX family. Monomer and dimer in solution. Interacts with ComFA and DprA; ComFA-ComFC form rings about 150 Angstroms in diameter with apparent 6-fold symmetry.

Functionally, involved in transformation (genetic competence for DNA uptake). This is Competence protein ComFC from Streptococcus pneumoniae (strain ATCC BAA-255 / R6).